The chain runs to 178 residues: MSRIGKQPIAIPAGVEVKLEGNLLKFKKGNLAKELDTKANVNVEIKDNNILFSPKGEDRQSRAYWGTYRALAYNIVVGLTQGFSKTLEINGVGYKAALKGKVLELSLGFSHPINYDIPEGIEIVVDKNTIAVKGSDKQVVGQVAAQIREFRPPEPYKGKGVKYSDERIIRKAGKTSKK.

The protein belongs to the universal ribosomal protein uL6 family. As to quaternary structure, part of the 50S ribosomal subunit.

Functionally, this protein binds to the 23S rRNA, and is important in its secondary structure. It is located near the subunit interface in the base of the L7/L12 stalk, and near the tRNA binding site of the peptidyltransferase center. The protein is Large ribosomal subunit protein uL6 of Campylobacter jejuni subsp. jejuni serotype O:2 (strain ATCC 700819 / NCTC 11168).